A 192-amino-acid chain; its full sequence is MVRAGAVGTHLPTSSLDIFGDLRKMNKRQLYYQVLNFAMIVSSALMIWKGLIVLTGSESPIVVVLSGSMEPAFHRGDLLFLTNFREDPIRAGEIVVFKVEGRDIPIVHRVIKVHEKDNGDIKFLTKGDNNEVDDRGLYKEGQNWLEKKDVVGRARGFLPYVGMVTIIMNDYPKFKYALVAVMGAYVLLKRES.

The Cytoplasmic portion of the chain corresponds to 1-28 (MVRAGAVGTHLPTSSLDIFGDLRKMNKR). Residues 29-48 (QLYYQVLNFAMIVSSALMIW) form a helical; Signal-anchor for type II membrane protein membrane-spanning segment. Topologically, residues 49–192 (KGLIVLTGSE…GAYVLLKRES (144 aa)) are lumenal. Catalysis depends on charge relay system residues Ser68, His108, and Asp134. A C-terminal short (CTS) helix region spans residues 177-188 (ALVAVMGAYVLL).

Belongs to the peptidase S26B family. In terms of assembly, component of the signal peptidase complex paralog C (SPC-C) composed of a catalytic subunit SEC11C and three accessory subunits SPCS1, SPCS2 and SPCS3. Within the complex, interacts with SPCS2 and SPCS3. The complex induces a local thinning of the ER membrane which is used to measure the length of the signal peptide (SP) h-region of protein substrates. This ensures the selectivity of the complex towards h-regions shorter than 18-20 amino acids. In terms of processing, may undergo processing at the N-terminus.

It localises to the endoplasmic reticulum membrane. It catalyses the reaction Cleavage of hydrophobic, N-terminal signal or leader sequences from secreted and periplasmic proteins.. In terms of biological role, catalytic component of the signal peptidase complex (SPC) which catalyzes the cleavage of N-terminal signal sequences from nascent proteins as they are translocated into the lumen of the endoplasmic reticulum. Specifically cleaves N-terminal signal peptides that contain a hydrophobic alpha-helix (h-region) shorter than 18-20 amino acids. The polypeptide is Signal peptidase complex catalytic subunit SEC11C (Sec11c) (Rattus norvegicus (Rat)).